Consider the following 294-residue polypeptide: Pyridoxal 5'-phosphate synthase subunit PdxS (294 aa).

D24 is a D-ribose 5-phosphate binding site. K81 serves as the catalytic Schiff-base intermediate with D-ribose 5-phosphate. G153 is a D-ribose 5-phosphate binding site. A D-glyceraldehyde 3-phosphate-binding site is contributed by R165. Residues G214 and 235-236 (GS) each bind D-ribose 5-phosphate.

The protein belongs to the PdxS/SNZ family. In terms of assembly, homohexamer and homododecamer. In the presence of PdxT, forms a dodecamer of heterodimers.

It carries out the reaction aldehydo-D-ribose 5-phosphate + D-glyceraldehyde 3-phosphate + L-glutamine = pyridoxal 5'-phosphate + L-glutamate + phosphate + 3 H2O + H(+). It participates in cofactor biosynthesis; pyridoxal 5'-phosphate biosynthesis. Functionally, catalyzes the formation of pyridoxal 5'-phosphate from ribose 5-phosphate (RBP), glyceraldehyde 3-phosphate (G3P) and ammonia. The ammonia is provided by the PdxT subunit. Can also use ribulose 5-phosphate and dihydroxyacetone phosphate as substrates, resulting from enzyme-catalyzed isomerization of RBP and G3P, respectively. This chain is Pyridoxal 5'-phosphate synthase subunit PdxS, found in Geobacillus kaustophilus (strain HTA426).